A 137-amino-acid polypeptide reads, in one-letter code: Putative nickel-responsive regulator (137 aa).

Residues His-79, His-90, His-92, and Cys-98 each coordinate Ni(2+).

Belongs to the transcriptional regulatory CopG/NikR family. Ni(2+) is required as a cofactor.

Its function is as follows. Transcriptional regulator. This Campylobacter concisus (strain 13826) protein is Putative nickel-responsive regulator.